The primary structure comprises 321 residues: L-Ala-D/L-Glu epimerase (321 aa).

The substrate site is built by T124 and K149. The Proton acceptor; specific for (R)-substrate epimerization role is filled by K151. Residues D176, E202, and D225 each coordinate Mg(2+). K247 serves as the catalytic Proton acceptor; specific for (S)-substrate epimerization. 3 residues coordinate substrate: C275, D297, and D299.

It belongs to the mandelate racemase/muconate lactonizing enzyme family. In terms of assembly, monomer. Requires Mg(2+) as cofactor.

It catalyses the reaction L-alanyl-L-glutamate = L-alanyl-D-glutamate. It participates in cell wall biogenesis; peptidoglycan recycling. Its function is as follows. Catalyzes the epimerization of L-Ala-D-Glu to L-Ala-L-Glu and has a role in the recycling of the murein peptide, of which L-Ala-D-Glu is a component. Is also able to catalyze the reverse reaction and the epimerization of all the L-Ala-X dipeptides, except L-Ala-L-Arg, L-Ala-L-Lys and L-Ala-L-Pro. Is also active with L-Gly-L-Glu, L-Phe-L-Glu, and L-Ser-L-Glu, but not with L-Glu-L-Glu, L-Lys-L-Glu, L-Pro-L-Glu, L-Lys-L-Ala, or D-Ala-D-Ala. The polypeptide is L-Ala-D/L-Glu epimerase (ycjG) (Escherichia coli (strain K12)).